We begin with the raw amino-acid sequence, 465 residues long: Cysteine--tRNA ligase (465 aa).

Residue cysteine 30 coordinates Zn(2+). The 'HIGH' region motif lies at 32 to 42; the sequence is MTVYDYCHVGH. Zn(2+) contacts are provided by cysteine 214, histidine 239, and glutamate 243. The 'KMSKS' region signature appears at 271 to 275; that stretch reads KMSKS. Lysine 274 serves as a coordination point for ATP.

The protein belongs to the class-I aminoacyl-tRNA synthetase family. As to quaternary structure, monomer. It depends on Zn(2+) as a cofactor.

It localises to the cytoplasm. The enzyme catalyses tRNA(Cys) + L-cysteine + ATP = L-cysteinyl-tRNA(Cys) + AMP + diphosphate. This chain is Cysteine--tRNA ligase, found in Paraburkholderia xenovorans (strain LB400).